Consider the following 802-residue polypeptide: Leucine--tRNA ligase (802 aa).

The 'HIGH' region signature appears at 40–51; the sequence is PYPSGAGLHVGH. Residues 576–580 carry the 'KMSKS' region motif; it reads KMSKS. Residue K579 participates in ATP binding.

The protein belongs to the class-I aminoacyl-tRNA synthetase family.

It localises to the cytoplasm. It catalyses the reaction tRNA(Leu) + L-leucine + ATP = L-leucyl-tRNA(Leu) + AMP + diphosphate. This is Leucine--tRNA ligase from Bacillus thuringiensis subsp. konkukian (strain 97-27).